A 379-amino-acid chain; its full sequence is Multicilin (379 aa).

Positions 1-129 (MQACEGSAAG…AMDDLIADSS (129 aa)) are necessary and sufficient for its degradation during the cell cycle. 2 disordered regions span residues 26-71 (SRRT…APLP) and 88-107 (LGTE…PSLQ). Over residues 92–107 (ASPSGDSSASQNPSLQ) the composition is skewed to polar residues. A necessary and sufficient for proper nuclear localization region spans residues 130-379 (SLMSPPLTNS…GGYKFRWVPS (250 aa)). The interval 171–241 (PPPTEQYWKE…SVLDKLMITQ (71 aa)) is necessary and sufficient for interaction with GMNN and sufficient for homodimerization. A coiled-coil region spans residues 175–223 (EQYWKEVADQNQRALGTALIENNQLHVTLTQKQEEIASLRERNVQLKEL). The segment covering 291–309 (NRDPKRPRLQPEPDSKDCS) has biased composition (basic and acidic residues). Residues 291 to 312 (NRDPKRPRLQPEPDSKDCSSRN) form a disordered region.

The protein belongs to the geminin family. As to quaternary structure, heterodimer (via coiled-coil domain) with GMNN (via coiled-coil domain); targets GMNN to the nucleus. Can form homodimers (in vitro, via coiled-coil domain), but these are much less stable than the heterodimer formed with GMNN.

It localises to the nucleus. Functionally, transcription regulator specifically required for multiciliate cell differentiation. Acts in a multiprotein complex containing E2F4 and E2F5 that binds and activates genes required for centriole biogenesis. Required for the deuterosome-mediated acentriolar pathway. Plays a role in mitotic cell cycle progression by promoting cell cycle exit. Modulates GMNN activity by reducing its affinity for CDT1. The sequence is that of Multicilin (Mcidas) from Mus musculus (Mouse).